Here is a 127-residue protein sequence, read N- to C-terminus: Cuticle protein 4 (127 aa).

Residue Gln1 is modified to Pyrrolidone carboxylic acid. A run of 2 repeats spans residues 31–39 (PADTKKAEI) and 84–92 (PADTKKAEI).

The protein is Cuticle protein 4 of Blaberus craniifer (Death's head cockroach).